A 267-amino-acid chain; its full sequence is Lectin SfL-2 (267 aa).

4 tandem repeats follow at residues 1–67, 68–135, 136–202, and 203–267. Positions 1 to 267 are 4 X approximate tandem repeats; the sequence is GRYTVQNQWG…GPIGFKGVAN (267 aa).

Monomer.

Its function is as follows. Lectin specific for high mannose N-glycans, recognizes the branched moiety of these glycans. Does not recognize other types of N-glycans or monosaccharides. The polypeptide is Lectin SfL-2 (Solieria filiformis (Red alga)).